A 432-amino-acid chain; its full sequence is Adenylosuccinate synthetase (432 aa).

GTP-binding positions include Gly13 to Lys19 and Gly41 to Thr43. Residue Asp14 is the Proton acceptor of the active site. Mg(2+) contacts are provided by Asp14 and Gly41. IMP is bound by residues Asp14–Lys17, Asn39–His42, Thr130, Arg144, Gln225, Thr240, and Arg304. His42 acts as the Proton donor in catalysis. Ala300–Arg306 contacts substrate. GTP-binding positions include Arg306, Lys332–Asp334, and Ser415–Gly417.

The protein belongs to the adenylosuccinate synthetase family. In terms of assembly, homodimer. The cofactor is Mg(2+).

The protein resides in the cytoplasm. The catalysed reaction is IMP + L-aspartate + GTP = N(6)-(1,2-dicarboxyethyl)-AMP + GDP + phosphate + 2 H(+). It functions in the pathway purine metabolism; AMP biosynthesis via de novo pathway; AMP from IMP: step 1/2. Its function is as follows. Plays an important role in the de novo pathway of purine nucleotide biosynthesis. Catalyzes the first committed step in the biosynthesis of AMP from IMP. The chain is Adenylosuccinate synthetase from Vibrio cholerae serotype O1 (strain M66-2).